We begin with the raw amino-acid sequence, 431 residues long: Glutamate-1-semialdehyde 2,1-aminomutase (431 aa).

N6-(pyridoxal phosphate)lysine is present on lysine 269.

Belongs to the class-III pyridoxal-phosphate-dependent aminotransferase family. HemL subfamily. In terms of assembly, homodimer. It depends on pyridoxal 5'-phosphate as a cofactor.

The protein localises to the cytoplasm. It catalyses the reaction (S)-4-amino-5-oxopentanoate = 5-aminolevulinate. Its pathway is porphyrin-containing compound metabolism; protoporphyrin-IX biosynthesis; 5-aminolevulinate from L-glutamyl-tRNA(Glu): step 2/2. The protein is Glutamate-1-semialdehyde 2,1-aminomutase of Francisella tularensis subsp. holarctica (strain FTNF002-00 / FTA).